The chain runs to 507 residues: Methionine--tRNA ligase (507 aa).

The short motif at 12 to 22 is the 'HIGH' region element; it reads YYVNDVSHIGH. A 'KMSKS' region motif is present at residues 295-299; that stretch reads KISKS. Residue lysine 298 coordinates ATP.

It belongs to the class-I aminoacyl-tRNA synthetase family. MetG type 2B subfamily. Monomer.

It is found in the cytoplasm. The enzyme catalyses tRNA(Met) + L-methionine + ATP = L-methionyl-tRNA(Met) + AMP + diphosphate. Functionally, is required not only for elongation of protein synthesis but also for the initiation of all mRNA translation through initiator tRNA(fMet) aminoacylation. The chain is Methionine--tRNA ligase from Rickettsia typhi (strain ATCC VR-144 / Wilmington).